The sequence spans 223 residues: MMIAGIDEAGKGPVIGPMCIGGVKIEESRAHILKVLGVADSKKLTPKKREQLASQIKKHADGFFILEITPAQIDELRKIMSMNEIMVICFAKVLEQLKPDIVYADAADVKAERFAENLRRQYAKTNPAHAKKIEIISMHQADAIYPVVSAASIIAKVRRDELIEEIKKEWSVDFGSGYPSDPKTKAFLLKWGKEHDGKFPEIVRQSWQTVENIREELEKAGKK.

The RNase H type-2 domain occupies 1 to 219; sequence MMIAGIDEAG…VENIREELEK (219 aa). A divalent metal cation-binding residues include Asp7, Glu8, and Asp105.

The protein belongs to the RNase HII family. Mn(2+) serves as cofactor. Requires Mg(2+) as cofactor.

Its subcellular location is the cytoplasm. It carries out the reaction Endonucleolytic cleavage to 5'-phosphomonoester.. Functionally, endonuclease that specifically degrades the RNA of RNA-DNA hybrids. The chain is Ribonuclease HII from Methanosarcina acetivorans (strain ATCC 35395 / DSM 2834 / JCM 12185 / C2A).